We begin with the raw amino-acid sequence, 353 residues long: D-alanine--D-alanine ligase (353 aa).

The region spanning 141–349 (KAAFAAAGLS…LPQLVAELVD (209 aa)) is the ATP-grasp domain. 176-231 (EQELGYPCFVKPANLGSSVGITKANNRDELLAGLHQAAALDPRLLVEQGVNARELE) contacts ATP. The Mg(2+) site is built by Asp302, Glu316, and Asn318.

Belongs to the D-alanine--D-alanine ligase family. It depends on Mg(2+) as a cofactor. Mn(2+) is required as a cofactor.

It is found in the cytoplasm. It catalyses the reaction 2 D-alanine + ATP = D-alanyl-D-alanine + ADP + phosphate + H(+). It participates in cell wall biogenesis; peptidoglycan biosynthesis. In terms of biological role, cell wall formation. This is D-alanine--D-alanine ligase from Synechococcus sp. (strain WH7803).